Consider the following 83-residue polypeptide: Apolipoprotein C-I, acidic form (83 aa).

Residues 1–26 (MRLFLSLPVLVVVLSIVLEGPAPAQG) form the signal peptide.

The protein belongs to the apolipoprotein C1 family.

The protein resides in the secreted. The protein is Apolipoprotein C-I, acidic form (APOC1A) of Pan paniscus (Pygmy chimpanzee).